A 499-amino-acid chain; its full sequence is Phenylalanine--tRNA ligase alpha subunit (499 aa).

Residues Thr342, 381 to 383 (QID), and Phe422 contribute to the L-phenylalanine site. Position 424 (Glu424) interacts with Mg(2+). Phe447 is an L-phenylalanine binding site.

Belongs to the class-II aminoacyl-tRNA synthetase family. Phe-tRNA synthetase alpha subunit type 2 subfamily. As to quaternary structure, tetramer of two alpha and two beta subunits. The cofactor is Mg(2+).

It is found in the cytoplasm. The enzyme catalyses tRNA(Phe) + L-phenylalanine + ATP = L-phenylalanyl-tRNA(Phe) + AMP + diphosphate + H(+). The polypeptide is Phenylalanine--tRNA ligase alpha subunit (Pyrococcus horikoshii (strain ATCC 700860 / DSM 12428 / JCM 9974 / NBRC 100139 / OT-3)).